A 175-amino-acid polypeptide reads, in one-letter code: MNLKDYIRSIPDYPKKGILFRDITTLIKDADAFEECINQIIERSKNYKIDKIAAIESRGFVFASAVSYLLKKPFIMFRKKNKLPAETHSVDFELEYGTATIEVHKDSIDKDDSVLIIDDLIATGGTAEAAAKLVEMSNAKIAAFVFAINLFDLGGSDNLVKKGYKVENLMDFPGH.

The protein belongs to the purine/pyrimidine phosphoribosyltransferase family. As to quaternary structure, homodimer.

It localises to the cytoplasm. The enzyme catalyses AMP + diphosphate = 5-phospho-alpha-D-ribose 1-diphosphate + adenine. It participates in purine metabolism; AMP biosynthesis via salvage pathway; AMP from adenine: step 1/1. In terms of biological role, catalyzes a salvage reaction resulting in the formation of AMP, that is energically less costly than de novo synthesis. The chain is Adenine phosphoribosyltransferase from Pelagibacter ubique (strain HTCC1062).